The chain runs to 511 residues: 2-isopropylmalate synthase (511 aa).

A Pyruvate carboxyltransferase domain is found at 5–267 (LIVFDTTLRD…DTRIDATQIV (263 aa)). Positions 14, 202, 204, and 238 each coordinate Mn(2+). Residues 393 to 511 (RLVASRFHSE…SKLERLNPQL (119 aa)) are regulatory domain.

This sequence belongs to the alpha-IPM synthase/homocitrate synthase family. LeuA type 1 subfamily. As to quaternary structure, homodimer. Requires Mn(2+) as cofactor.

It localises to the cytoplasm. It catalyses the reaction 3-methyl-2-oxobutanoate + acetyl-CoA + H2O = (2S)-2-isopropylmalate + CoA + H(+). The protein operates within amino-acid biosynthesis; L-leucine biosynthesis; L-leucine from 3-methyl-2-oxobutanoate: step 1/4. In terms of biological role, catalyzes the condensation of the acetyl group of acetyl-CoA with 3-methyl-2-oxobutanoate (2-ketoisovalerate) to form 3-carboxy-3-hydroxy-4-methylpentanoate (2-isopropylmalate). This Aromatoleum aromaticum (strain DSM 19018 / LMG 30748 / EbN1) (Azoarcus sp. (strain EbN1)) protein is 2-isopropylmalate synthase.